The sequence spans 83 residues: Kunitz-type serine protease inhibitor vestiginin-2 (83 aa).

An N-terminal signal peptide occupies residues 1–24; sequence MSSGGLLLLLGLLTLWAELTPVSS. Positions 31 to 81 constitute a BPTI/Kunitz inhibitor domain; it reads CELPPDRGTCMGYSQAFYYNPSQNKCLPFMFGGCKANPNNFKTLEECKRTC. 3 disulfide bridges follow: Cys31/Cys81, Cys40/Cys64, and Cys56/Cys77.

The protein belongs to the venom Kunitz-type family. Expressed by the venom gland.

The protein resides in the secreted. Its function is as follows. Serine protease inhibitor. The sequence is that of Kunitz-type serine protease inhibitor vestiginin-2 from Demansia vestigiata (Lesser black whip snake).